Consider the following 139-residue polypeptide: Putative nickel-responsive regulator (139 aa).

4 residues coordinate Ni(2+): His-79, His-90, His-92, and Cys-98.

This sequence belongs to the transcriptional regulatory CopG/NikR family. The cofactor is Ni(2+).

Its function is as follows. Transcriptional regulator. The sequence is that of Putative nickel-responsive regulator from Solibacter usitatus (strain Ellin6076).